The chain runs to 204 residues: NAD(P)H dehydrogenase (quinone) (204 aa).

In terms of domain architecture, Flavodoxin-like spans 4-195; it reads IQIVFYSMYG…AIARFQGAHV (192 aa). Residues 10-15 and 83-85 contribute to the FMN site; these read SMYGHI and TRF. Y12 serves as a coordination point for NAD(+). Residue W103 participates in substrate binding. FMN contacts are provided by residues 118–124 and H139; that span reads STATQHG.

It belongs to the WrbA family. The cofactor is FMN.

It carries out the reaction a quinone + NADH + H(+) = a quinol + NAD(+). It catalyses the reaction a quinone + NADPH + H(+) = a quinol + NADP(+). The polypeptide is NAD(P)H dehydrogenase (quinone) (Trichlorobacter lovleyi (strain ATCC BAA-1151 / DSM 17278 / SZ) (Geobacter lovleyi)).